The primary structure comprises 249 residues: MFHGKHPGGLSERGRALLLEGGKALGLDLKPHLEAFSRLYALLQEASGKVNLTALRGEEEVVVKHFLDSLTLLRLPLWQGPLRVLDLGTGAGFPGLPLKIVRPELELVLVDATRKKVAFVERAIEVLGLKGARALWGRAEVLAREAGHREAYARAVARAVAPLCVLSELLLPFLEVGGAAVAMKGPRVEEELAPLPPALERLGGRLGEVLALQLPLSGEARHLVVLEKTAPTPPAYPRRPGVPERHPLC.

S-adenosyl-L-methionine contacts are provided by residues glycine 88, phenylalanine 93, aspartate 111–threonine 113, alanine 139–glutamate 140, and arginine 158. A disulfide bridge connects residues cysteine 164 and cysteine 249. An RNA binding region spans residues arginine 245–histidine 246.

The protein belongs to the methyltransferase superfamily. RNA methyltransferase RsmG family.

It is found in the cytoplasm. It catalyses the reaction guanosine(527) in 16S rRNA + S-adenosyl-L-methionine = N(7)-methylguanosine(527) in 16S rRNA + S-adenosyl-L-homocysteine. In terms of biological role, specifically methylates the N7 position of guanine in position 527 of 16S rRNA. Shows a marked preference for deproteinized 16S rRNA as substrate and is completely inactive with native 30S subunits as substrate. The chain is Ribosomal RNA small subunit methyltransferase G from Thermus thermophilus (strain ATCC 27634 / DSM 579 / HB8).